The primary structure comprises 170 residues: Keratin-associated protein 9-2 (170 aa).

Repeat copies occupy residues 8–12 (CCQPT), 13–17 (CCRTT), 18–22 (CCRTT), 37–41 (CCQPT), 42–46 (CCVSS), 51–55 (CCCPT), 61–65 (CCRTT), 66–70 (CCQPT), 75–79 (CYQPS), 80–84 (CCSTP), 85–89 (CCQPT), 90–94 (CCGSS), 95–99 (CCGQT), 140–144 (CCHPA), 145–149 (CCETT), 150–154 (CCRTT), and 164–168 (CCQPS). The 17 X 5 AA repeats of C-C-[RQVSGE]-[SPTQ]-[TASP] stretch occupies residues 8–168 (CCQPTCCRTT…TCVSSCCQPS (161 aa)).

It belongs to the KRTAP type 9 family. Interacts with hair keratins.

Its function is as follows. In the hair cortex, hair keratin intermediate filaments are embedded in an interfilamentous matrix, consisting of hair keratin-associated proteins (KRTAP), which are essential for the formation of a rigid and resistant hair shaft through their extensive disulfide bond cross-linking with abundant cysteine residues of hair keratins. The matrix proteins include the high-sulfur and high-glycine-tyrosine keratins. This chain is Keratin-associated protein 9-2 (KRTAP9-2), found in Pan troglodytes (Chimpanzee).